The primary structure comprises 107 residues: Ribonuclease P protein component 4 (107 aa).

The Zn(2+) site is built by Cys-66, Cys-69, Cys-92, and Cys-95.

The protein belongs to the eukaryotic/archaeal RNase P protein component 4 family. In terms of assembly, consists of a catalytic RNA component and at least 4-5 protein subunits. Zn(2+) serves as cofactor.

The protein localises to the cytoplasm. It carries out the reaction Endonucleolytic cleavage of RNA, removing 5'-extranucleotides from tRNA precursor.. Part of ribonuclease P, a protein complex that generates mature tRNA molecules by cleaving their 5'-ends. This is Ribonuclease P protein component 4 from Methanosarcina barkeri (strain Fusaro / DSM 804).